Consider the following 464-residue polypeptide: tRNA-2-methylthio-N(6)-dimethylallyladenosine synthase (464 aa).

Residues 19–135 (GSYWITTFGC…LENLLGKVDL (117 aa)) form the MTTase N-terminal domain. [4Fe-4S] cluster-binding residues include cysteine 28, cysteine 64, cysteine 98, cysteine 170, cysteine 174, and cysteine 177. The 239-residue stretch at 156–394 (RESSICGWVN…DLVEKTARSR (239 aa)) folds into the Radical SAM core domain. The 69-residue stretch at 396 to 464 (QRYIDNIESV…PFSLTGELSL (69 aa)) folds into the TRAM domain.

It belongs to the methylthiotransferase family. MiaB subfamily. As to quaternary structure, monomer. [4Fe-4S] cluster is required as a cofactor.

The protein localises to the cytoplasm. The catalysed reaction is N(6)-dimethylallyladenosine(37) in tRNA + (sulfur carrier)-SH + AH2 + 2 S-adenosyl-L-methionine = 2-methylsulfanyl-N(6)-dimethylallyladenosine(37) in tRNA + (sulfur carrier)-H + 5'-deoxyadenosine + L-methionine + A + S-adenosyl-L-homocysteine + 2 H(+). Functionally, catalyzes the methylthiolation of N6-(dimethylallyl)adenosine (i(6)A), leading to the formation of 2-methylthio-N6-(dimethylallyl)adenosine (ms(2)i(6)A) at position 37 in tRNAs that read codons beginning with uridine. The protein is tRNA-2-methylthio-N(6)-dimethylallyladenosine synthase of Prochlorococcus marinus (strain MIT 9301).